A 272-amino-acid polypeptide reads, in one-letter code: Putative phosphoenolpyruvate synthase regulatory protein (272 aa).

152–159 (GVSRCGKT) serves as a coordination point for ADP.

This sequence belongs to the pyruvate, phosphate/water dikinase regulatory protein family. PSRP subfamily.

It catalyses the reaction [pyruvate, water dikinase] + ADP = [pyruvate, water dikinase]-phosphate + AMP + H(+). The catalysed reaction is [pyruvate, water dikinase]-phosphate + phosphate + H(+) = [pyruvate, water dikinase] + diphosphate. Its function is as follows. Bifunctional serine/threonine kinase and phosphorylase involved in the regulation of the phosphoenolpyruvate synthase (PEPS) by catalyzing its phosphorylation/dephosphorylation. The polypeptide is Putative phosphoenolpyruvate synthase regulatory protein (Pseudomonas savastanoi pv. phaseolicola (strain 1448A / Race 6) (Pseudomonas syringae pv. phaseolicola (strain 1448A / Race 6))).